Reading from the N-terminus, the 652-residue chain is Acetyl-coenzyme A synthetase (652 aa).

Residues 189 to 192 and Ser311 contribute to the CoA site; that span reads RGGK. ATP is bound by residues 387 to 389, 411 to 416, Asp500, and Arg515; these read GEP and DTWWQT. Ser523 contacts CoA. An ATP-binding site is contributed by Arg526. Val537, His539, and Ile542 together coordinate Mg(2+). Lys584 lines the CoA pocket. The residue at position 609 (Lys609) is an N6-acetyllysine.

Belongs to the ATP-dependent AMP-binding enzyme family. Mg(2+) is required as a cofactor. In terms of processing, acetylated. Deacetylation by the SIR2-homolog deacetylase activates the enzyme.

The enzyme catalyses acetate + ATP + CoA = acetyl-CoA + AMP + diphosphate. In terms of biological role, catalyzes the conversion of acetate into acetyl-CoA (AcCoA), an essential intermediate at the junction of anabolic and catabolic pathways. AcsA undergoes a two-step reaction. In the first half reaction, AcsA combines acetate with ATP to form acetyl-adenylate (AcAMP) intermediate. In the second half reaction, it can then transfer the acetyl group from AcAMP to the sulfhydryl group of CoA, forming the product AcCoA. In Bartonella quintana (strain Toulouse) (Rochalimaea quintana), this protein is Acetyl-coenzyme A synthetase.